We begin with the raw amino-acid sequence, 876 residues long: SED5-binding protein 2 (876 aa).

Phosphoserine is present on serine 51. A zinc finger-like region spans residues 164–189 (CRRCRSYMNPFVVFINQGRKWQCNIC). A compositionally biased stretch (acidic residues) spans 300-324 (VSDEDDEESDGEEEDEDEEEEDVDN). Residues 300–326 (VSDEDDEESDGEEEDEDEEEEDVDNSE) form a disordered region.

Belongs to the SEC23/SEC24 family. SEC24 subfamily. As to quaternary structure, COPII is composed of at least five proteins: the SEC23/24 complex, the SEC13/31 complex and SAR1. Interacts with GRH1.

It is found in the cytoplasm. The protein resides in the golgi apparatus membrane. It localises to the endoplasmic reticulum membrane. In terms of biological role, component of the COPII coat, that covers ER-derived vesicles involved in transport from the endoplasmic reticulum to the Golgi apparatus. COPII acts in the cytoplasm to promote the transport of secretory, plasma membrane, and vacuolar proteins from the endoplasmic reticulum to the Golgi complex. The chain is SED5-binding protein 2 (SFB2) from Saccharomyces cerevisiae (strain ATCC 204508 / S288c) (Baker's yeast).